The primary structure comprises 140 residues: Small ribosomal subunit protein uS12m (140 aa).

This sequence belongs to the universal ribosomal protein uS12 family.

It is found in the mitochondrion. The chain is Small ribosomal subunit protein uS12m (mrps12) from Dictyostelium discoideum (Social amoeba).